A 450-amino-acid polypeptide reads, in one-letter code: MAQFFKAKPNSSKQLSAKLSLNVDQLDHLGAGIAQYQGKVVFIPGALPDETVTVQLTEQKKNYARAKLIKVDAQSPERVEPECPHYHTCGGCDLQHMSLSGQREHKEAALLDIMAKFAGTEGGALSPALTGEGWHYRRRARLATLFDKNTKHLSLGFRAASSSNVVPISQCQVLAKPLSDLIVPFAKLLNQLSAKASLGHLELIAADNGHFAVLRITKALNDKDLAKLSAFAEQHQIYICLQDNEGQFQGVGVELVLPVYQLLDENAQSDAVSLSFTPGNFVQVNSQINKAMVAQAMDWLAPAPDERILDLFCGMGNFSLPLAKMGADVIGVEGVAEMVSQARVNAKANNLDKLTFYHGDLSADLSLEPWMGKIDKLLLDPARAGAFESLQWLKKMKPRKVLYVSCNPASLARDSTVLLERGYRLQRLGLIDMFPQTHHIEAMALFELTK.

The 59-residue stretch at 12-70 folds into the TRAM domain; sequence SKQLSAKLSLNVDQLDHLGAGIAQYQGKVVFIPGALPDETVTVQLTEQKKNYARAKLIK. [4Fe-4S] cluster contacts are provided by C83, C89, C92, and C171. Residues Q283, F312, N317, E333, D360, and D380 each coordinate S-adenosyl-L-methionine. The active-site Nucleophile is the C406.

This sequence belongs to the class I-like SAM-binding methyltransferase superfamily. RNA M5U methyltransferase family. RlmD subfamily.

The catalysed reaction is uridine(1939) in 23S rRNA + S-adenosyl-L-methionine = 5-methyluridine(1939) in 23S rRNA + S-adenosyl-L-homocysteine + H(+). Its function is as follows. Catalyzes the formation of 5-methyl-uridine at position 1939 (m5U1939) in 23S rRNA. This is 23S rRNA (uracil(1939)-C(5))-methyltransferase RlmD from Shewanella putrefaciens (strain CN-32 / ATCC BAA-453).